Reading from the N-terminus, the 488-residue chain is MALKNKVQLITYPDSLGGNLKTLNDVLEKYFSDVFGGVHILPPFPSSGDRGFAPITYSEIEPKFGTWYDIKKMAENFDILLDLMVNHVSRRSIYFQDFLKKGRKSEYADMFITLDKLWKDGKPVKGDIEKMFLRRTLPYSTFKIEETGEEEKVWTTFGKTDPSEQIDLDVNSHLVREFLLEVFKTFSNFGVKIVRLDAVGYVIKKIGTSCFFVEPEIYEFLDWAKGQAASYGIELLLEVHSQFEVQYKLAERGFLIYDFILPFTVLYTLINKSNEMLYHYLKNRPINQFTMLDCHDGIPVKPDLDGLIDTKKAKEVVDICVQRGANLSLIYGDKYKSEDGFDVHQINCTYYSALNCDDDAYLAARAIQFFTPGIPQVYYVGLLAGVNDFEAVKKTKEGREINRHNYGLKEIEESVQKNVVQRLLKLIRFRNEYEAFNGEFFIEDCRKDEIRLTWKKDDKRCSLFIDLKTYKTTIDYINENGEEVKYLV.

Sucrose 6(F)-phosphate contacts are provided by residues aspartate 49, histidine 87, 195–197 (RLD), glutamate 238, 295–296 (HD), 342–345 (DVHQ), and arginine 399. Aspartate 197 functions as the Nucleophile in the catalytic mechanism. The Proton donor/acceptor role is filled by glutamate 238.

This sequence belongs to the glycosyl hydrolase 13 family. Sucrose phosphorylase subfamily. Monomer.

The catalysed reaction is sucrose 6(F)-phosphate + phosphate = beta-D-fructose 6-phosphate + alpha-D-glucose 1-phosphate. In terms of biological role, catalyzes the reversible phosphorolysis of sucrose 6(F)-phosphate into alpha-D-glucose 1-phosphate (Glc1P) and D-fructose 6-phosphate. May be involved in a new pathway for the degradation of sucrose, which could become phosphorylated on its fructose moiety during uptake via a PTS system. To a lesser extent, can also reversibly act on sucrose in vitro. Is also able to catalyze transglycosylation reactions in vitro. This Thermoanaerobacterium thermosaccharolyticum (strain ATCC 7956 / DSM 571 / NCIMB 9385 / NCA 3814 / NCTC 13789 / WDCM 00135 / 2032) (Clostridium thermosaccharolyticum) protein is Sucrose 6(F)-phosphate phosphorylase.